A 267-amino-acid polypeptide reads, in one-letter code: Eukaryotic translation initiation factor 3 subunit J (267 aa).

Disordered regions lie at residues 1–128 (MAPS…DIDL) and 220–241 (KMREERAADKGNKKTKAAKTKV). The span at 28-46 (DEEEEDVLDSWDAAEDSEV) shows a compositional bias: acidic residues. Positions 44 to 96 (SEVEREKAAKAAAAAAKAEAEAAAKKKSKAQRIEEHKQERKKQAEANESDEDS) form a coiled coil. A compositionally biased stretch (basic and acidic residues) spans 74–88 (QRIEEHKQERKKQAE). The span at 90–100 (NESDEDSDEDE) shows a compositional bias: acidic residues. 2 stretches are compositionally biased toward basic and acidic residues: residues 108–121 (RRTEKEGDLKHAQD) and 220–231 (KMREERAADKGN).

The protein belongs to the eIF-3 subunit J family. As to quaternary structure, component of the eukaryotic translation initiation factor 3 (eIF-3) complex.

The protein localises to the cytoplasm. Functionally, component of the eukaryotic translation initiation factor 3 (eIF-3) complex, which is involved in protein synthesis of a specialized repertoire of mRNAs and, together with other initiation factors, stimulates binding of mRNA and methionyl-tRNAi to the 40S ribosome. The eIF-3 complex specifically targets and initiates translation of a subset of mRNAs involved in cell proliferation. The chain is Eukaryotic translation initiation factor 3 subunit J (hcr1) from Neosartorya fischeri (strain ATCC 1020 / DSM 3700 / CBS 544.65 / FGSC A1164 / JCM 1740 / NRRL 181 / WB 181) (Aspergillus fischerianus).